The sequence spans 99 residues: UPF0235 protein Sbal223_1335 (99 aa).

It belongs to the UPF0235 family.

This is UPF0235 protein Sbal223_1335 from Shewanella baltica (strain OS223).